The primary structure comprises 152 residues: D-aminoacyl-tRNA deacylase (152 aa).

The Gly-cisPro motif, important for rejection of L-amino acids signature appears at 137–138 (GP).

This sequence belongs to the DTD family. In terms of assembly, homodimer.

It localises to the cytoplasm. It catalyses the reaction glycyl-tRNA(Ala) + H2O = tRNA(Ala) + glycine + H(+). The catalysed reaction is a D-aminoacyl-tRNA + H2O = a tRNA + a D-alpha-amino acid + H(+). An aminoacyl-tRNA editing enzyme that deacylates mischarged D-aminoacyl-tRNAs. Also deacylates mischarged glycyl-tRNA(Ala), protecting cells against glycine mischarging by AlaRS. Acts via tRNA-based rather than protein-based catalysis; rejects L-amino acids rather than detecting D-amino acids in the active site. By recycling D-aminoacyl-tRNA to D-amino acids and free tRNA molecules, this enzyme counteracts the toxicity associated with the formation of D-aminoacyl-tRNA entities in vivo and helps enforce protein L-homochirality. The chain is D-aminoacyl-tRNA deacylase from Thermus aquaticus.